The following is a 145-amino-acid chain: D-aminoacyl-tRNA deacylase (145 aa).

Positions glycine 137–proline 138 match the Gly-cisPro motif, important for rejection of L-amino acids motif.

This sequence belongs to the DTD family. In terms of assembly, homodimer.

Its subcellular location is the cytoplasm. It catalyses the reaction glycyl-tRNA(Ala) + H2O = tRNA(Ala) + glycine + H(+). It carries out the reaction a D-aminoacyl-tRNA + H2O = a tRNA + a D-alpha-amino acid + H(+). Functionally, an aminoacyl-tRNA editing enzyme that deacylates mischarged D-aminoacyl-tRNAs. Also deacylates mischarged glycyl-tRNA(Ala), protecting cells against glycine mischarging by AlaRS. Acts via tRNA-based rather than protein-based catalysis; rejects L-amino acids rather than detecting D-amino acids in the active site. By recycling D-aminoacyl-tRNA to D-amino acids and free tRNA molecules, this enzyme counteracts the toxicity associated with the formation of D-aminoacyl-tRNA entities in vivo and helps enforce protein L-homochirality. This chain is D-aminoacyl-tRNA deacylase, found in Shewanella baltica (strain OS155 / ATCC BAA-1091).